A 457-amino-acid polypeptide reads, in one-letter code: Argininosuccinate lyase (457 aa).

This sequence belongs to the lyase 1 family. Argininosuccinate lyase subfamily.

Its subcellular location is the cytoplasm. It carries out the reaction 2-(N(omega)-L-arginino)succinate = fumarate + L-arginine. Its pathway is amino-acid biosynthesis; L-arginine biosynthesis; L-arginine from L-ornithine and carbamoyl phosphate: step 3/3. The protein is Argininosuccinate lyase of Escherichia coli O127:H6 (strain E2348/69 / EPEC).